A 110-amino-acid chain; its full sequence is Vacuolar ATPase assembly integral membrane protein VMA21 (110 aa).

Residues 1–28 are disordered; the sequence is MTTRRIIGQDGEEKTYLDVDPRGPPGPS. At 1–44 the chain is on the cytoplasmic side; sequence MTTRRIIGQDGEEKTYLDVDPRGPPGPSNISPAVPASVIWKLMS. Over residues 11 to 21 the composition is skewed to basic and acidic residues; sequence GEEKTYLDVDP. Residues 45–65 form a helical membrane-spanning segment; it reads FTFAMITLPIGTYFFTVNYVF. Residues 66 to 71 are Lumenal-facing; the sequence is GGNATY. A helical transmembrane segment spans residues 72-92; it reads AGALAAIMANVVLIAYVIMAF. Residues 93 to 110 lie on the Cytoplasmic side of the membrane; that stretch reads KDDQAEQAEDAREAKKEL. The short motif at 107–110 is the Prevents secretion from ER element; the sequence is KKEL.

Belongs to the VMA21 family.

It localises to the endoplasmic reticulum membrane. Its subcellular location is the endoplasmic reticulum-Golgi intermediate compartment membrane. The protein localises to the cytoplasmic vesicle. The protein resides in the COPII-coated vesicle membrane. Its function is as follows. Required for the assembly of the V0 complex of the vacuolar ATPase (V-ATPase) in the endoplasmic reticulum. The protein is Vacuolar ATPase assembly integral membrane protein VMA21 of Phaeosphaeria nodorum (strain SN15 / ATCC MYA-4574 / FGSC 10173) (Glume blotch fungus).